The following is a 341-amino-acid chain: tRNA N6-adenosine threonylcarbamoyltransferase (341 aa).

Fe cation contacts are provided by His115 and His119. Substrate is bound by residues Ile137–Gly141, Asp170, Gly183, Asp187, and Asn276. Asp304 is a Fe cation binding site.

This sequence belongs to the KAE1 / TsaD family. The cofactor is Fe(2+).

It is found in the cytoplasm. It catalyses the reaction L-threonylcarbamoyladenylate + adenosine(37) in tRNA = N(6)-L-threonylcarbamoyladenosine(37) in tRNA + AMP + H(+). In terms of biological role, required for the formation of a threonylcarbamoyl group on adenosine at position 37 (t(6)A37) in tRNAs that read codons beginning with adenine. Is involved in the transfer of the threonylcarbamoyl moiety of threonylcarbamoyl-AMP (TC-AMP) to the N6 group of A37, together with TsaE and TsaB. TsaD likely plays a direct catalytic role in this reaction. This Staphylococcus aureus (strain MSSA476) protein is tRNA N6-adenosine threonylcarbamoyltransferase.